Consider the following 89-residue polypeptide: Aminoacyl carrier protein 2 (89 aa).

The Carrier domain maps to isoleucine 6 to leucine 84. O-(pantetheine 4'-phosphoryl)serine is present on serine 42.

4'-phosphopantetheine is transferred from CoA to a specific serine of the apo-form of this carrier protein.

Functionally, aminoacyl carrier protein. Can be charged with L-glycine via the formation of a thioester bond between the amino acid and the 4'-phosphopantetheinyl prosthetic group, catalyzed by the bll6282 ligase. This is Aminoacyl carrier protein 2 from Bradyrhizobium diazoefficiens (strain JCM 10833 / BCRC 13528 / IAM 13628 / NBRC 14792 / USDA 110).